The following is a 233-amino-acid chain: Ribonuclease 3 (233 aa).

The region spanning 4–126 (LNKLMERLGH…IVGAIYIDAG (123 aa)) is the RNase III domain. Residue E39 coordinates Mg(2+). Residue D43 is part of the active site. The Mg(2+) site is built by D112 and E115. E115 is a catalytic residue. One can recognise a DRBM domain in the interval 153–222 (DAKSLLQEWL…AKRFLELLDD (70 aa)).

This sequence belongs to the ribonuclease III family. In terms of assembly, homodimer. Mg(2+) is required as a cofactor.

The protein resides in the cytoplasm. The catalysed reaction is Endonucleolytic cleavage to 5'-phosphomonoester.. In terms of biological role, digests double-stranded RNA. Involved in the processing of primary rRNA transcript to yield the immediate precursors to the large and small rRNAs (23S and 16S). Processes some mRNAs, and tRNAs when they are encoded in the rRNA operon. Processes pre-crRNA and tracrRNA of type II CRISPR loci if present in the organism. This chain is Ribonuclease 3, found in Coxiella burnetii (strain CbuK_Q154) (Coxiella burnetii (strain Q154)).